A 201-amino-acid polypeptide reads, in one-letter code: Recombination protein RecR (201 aa).

The segment at 57–72 (CQQCRNFTEEALCEIC) adopts a C4-type zinc-finger fold. The region spanning 81–176 (TTLCIVETPG…NISRIAHGVP (96 aa)) is the Toprim domain.

Belongs to the RecR family.

In terms of biological role, may play a role in DNA repair. It seems to be involved in an RecBC-independent recombinational process of DNA repair. It may act with RecF and RecO. This chain is Recombination protein RecR, found in Colwellia psychrerythraea (strain 34H / ATCC BAA-681) (Vibrio psychroerythus).